A 348-amino-acid polypeptide reads, in one-letter code: Anthranilate phosphoribosyltransferase (348 aa).

5-phospho-alpha-D-ribose 1-diphosphate-binding positions include Gly81, 84 to 85, 91 to 94, 109 to 117, and Ser121; these read GD, NVST, and KHGNRAVSG. Residue Gly81 coordinates anthranilate. Residue Ser93 coordinates Mg(2+). Anthranilate is bound at residue Asn112. Arg167 provides a ligand contact to anthranilate. 2 residues coordinate Mg(2+): Asp226 and Glu227.

It belongs to the anthranilate phosphoribosyltransferase family. In terms of assembly, homodimer. Mg(2+) is required as a cofactor.

It catalyses the reaction N-(5-phospho-beta-D-ribosyl)anthranilate + diphosphate = 5-phospho-alpha-D-ribose 1-diphosphate + anthranilate. It functions in the pathway amino-acid biosynthesis; L-tryptophan biosynthesis; L-tryptophan from chorismate: step 2/5. Its function is as follows. Catalyzes the transfer of the phosphoribosyl group of 5-phosphorylribose-1-pyrophosphate (PRPP) to anthranilate to yield N-(5'-phosphoribosyl)-anthranilate (PRA). The chain is Anthranilate phosphoribosyltransferase from Azotobacter vinelandii (strain DJ / ATCC BAA-1303).